Consider the following 277-residue polypeptide: Alpha carbonic anhydrase 5 (277 aa).

The N-terminal stretch at 1–22 (MKIPSIGYVFFLIFISITIVSS) is a signal peptide. An Alpha-carbonic anhydrase domain is found at 33-269 (TQFNYEKKGE…KNERPVALYI (237 aa)). The cysteines at positions 58 and 219 are disulfide-linked. A glycan (N-linked (GlcNAc...) asparagine) is linked at N91. The active-site Proton acceptor is H99. N-linked (GlcNAc...) asparagine glycosylation is present at N117. Residues H127, H129, and H146 each coordinate Zn(2+). A substrate-binding site is contributed by 215 to 216 (TT).

It belongs to the alpha-class carbonic anhydrase family. Requires Zn(2+) as cofactor. N-glycosylated.

The protein resides in the plastid. It localises to the chloroplast stroma. It catalyses the reaction hydrogencarbonate + H(+) = CO2 + H2O. Reversible hydration of carbon dioxide. In Arabidopsis thaliana (Mouse-ear cress), this protein is Alpha carbonic anhydrase 5 (ACA5).